A 236-amino-acid chain; its full sequence is tRNA1(Val) (adenine(37)-N6)-methyltransferase (236 aa).

The protein belongs to the methyltransferase superfamily. tRNA (adenine-N(6)-)-methyltransferase family.

It is found in the cytoplasm. It carries out the reaction adenosine(37) in tRNA1(Val) + S-adenosyl-L-methionine = N(6)-methyladenosine(37) in tRNA1(Val) + S-adenosyl-L-homocysteine + H(+). Functionally, specifically methylates the adenine in position 37 of tRNA(1)(Val) (anticodon cmo5UAC). The chain is tRNA1(Val) (adenine(37)-N6)-methyltransferase from Shewanella sp. (strain MR-7).